A 170-amino-acid polypeptide reads, in one-letter code: MPNAAGRFGRLGWLWLSVLVLVIDQVSKLHFESSLSMYQQIVVIPDYFSWTLAYNTGAAFSFLADGSGWQRWLFALIAIAVSAVLVVWLKRLGRNETWLAIALALVLGGALGNLYDRIALGHVIDFILVHWQNRWYFPAFNFADSAITVGAVMLALDMFKSKKTGEAVHD.

4 helical membrane-spanning segments follow: residues 11–31 (LGWLWLSVLVLVIDQVSKLHF), 41–61 (IVVIPDYFSWTLAYNTGAAFS), 69–89 (WQRWLFALIAIAVSAVLVVWL), and 95–115 (NETWLAIALALVLGGALGNLY). Active-site residues include Asp125 and Asp144. Residues 136 to 156 (YFPAFNFADSAITVGAVMLAL) traverse the membrane as a helical segment.

It belongs to the peptidase A8 family.

Its subcellular location is the cell inner membrane. It catalyses the reaction Release of signal peptides from bacterial membrane prolipoproteins. Hydrolyzes -Xaa-Yaa-Zaa-|-(S,diacylglyceryl)Cys-, in which Xaa is hydrophobic (preferably Leu), and Yaa (Ala or Ser) and Zaa (Gly or Ala) have small, neutral side chains.. It functions in the pathway protein modification; lipoprotein biosynthesis (signal peptide cleavage). This protein specifically catalyzes the removal of signal peptides from prolipoproteins. In Pseudomonas fluorescens (strain ATCC BAA-477 / NRRL B-23932 / Pf-5), this protein is Lipoprotein signal peptidase.